The following is a 156-amino-acid chain: MNLNLTLLGQAISFAIFVWFCMKYVWPPVIAALEERSKKIADGLEAANRASRDLELAQEQASQILRESKENAAEIIEQANKRANQMVDEAKEQVIADGKRLREAAQAEIEQDVMRAKEALRAQVSVLAFAGAEKILGATIDEKAHSEIVEQLAKEL.

Residues Leu7–Val29 traverse the membrane as a helical segment.

It belongs to the ATPase B chain family. In terms of assembly, F-type ATPases have 2 components, F(1) - the catalytic core - and F(0) - the membrane proton channel. F(1) has five subunits: alpha(3), beta(3), gamma(1), delta(1), epsilon(1). F(0) has three main subunits: a(1), b(2) and c(10-14). The alpha and beta chains form an alternating ring which encloses part of the gamma chain. F(1) is attached to F(0) by a central stalk formed by the gamma and epsilon chains, while a peripheral stalk is formed by the delta and b chains.

The protein resides in the cell inner membrane. Functionally, f(1)F(0) ATP synthase produces ATP from ADP in the presence of a proton or sodium gradient. F-type ATPases consist of two structural domains, F(1) containing the extramembraneous catalytic core and F(0) containing the membrane proton channel, linked together by a central stalk and a peripheral stalk. During catalysis, ATP synthesis in the catalytic domain of F(1) is coupled via a rotary mechanism of the central stalk subunits to proton translocation. In terms of biological role, component of the F(0) channel, it forms part of the peripheral stalk, linking F(1) to F(0). In Marinomonas sp. (strain MWYL1), this protein is ATP synthase subunit b 2.